A 255-amino-acid polypeptide reads, in one-letter code: Syntaxin-23 (255 aa).

The disordered stretch occupies residues 1–31; it reads MSFQDLEAGRGRSLASSRNINGGGSRQDTTQ. At Ser2 the chain carries N-acetylserine. Positions 14 to 31 are enriched in polar residues; the sequence is LASSRNINGGGSRQDTTQ. Positions 184–246 constitute a t-SNARE coiled-coil homology domain; sequence EAVIEEREQG…AQGKSHLVRH (63 aa).

This sequence belongs to the syntaxin family. As to quaternary structure, part of the t-SNARE complex. Interacts with RGS1. In terms of tissue distribution, expressed at higher levels in leaves, flowers and stems than in roots.

The protein resides in the membrane. Its function is as follows. May function in the docking or fusion of transport vesicles with the prevacuolar membrane. The chain is Syntaxin-23 (SYP23) from Arabidopsis thaliana (Mouse-ear cress).